A 381-amino-acid chain; its full sequence is Homoserine O-succinyltransferase (381 aa).

Residues Ile-53–Leu-361 form the AB hydrolase-1 domain. The active-site Nucleophile is Ser-157. Arg-227 provides a ligand contact to substrate. Residues Asp-324 and His-357 contribute to the active site. Residue Asp-358 participates in substrate binding.

It belongs to the AB hydrolase superfamily. MetX family. Homodimer.

It is found in the cytoplasm. It carries out the reaction L-homoserine + succinyl-CoA = O-succinyl-L-homoserine + CoA. It participates in amino-acid biosynthesis; L-methionine biosynthesis via de novo pathway; O-succinyl-L-homoserine from L-homoserine: step 1/1. In terms of biological role, transfers a succinyl group from succinyl-CoA to L-homoserine, forming succinyl-L-homoserine. This chain is Homoserine O-succinyltransferase, found in Saccharophagus degradans (strain 2-40 / ATCC 43961 / DSM 17024).